Consider the following 198-residue polypeptide: Guanylate kinase (198 aa).

Residues K6–H192 enclose the Guanylate kinase-like domain. G13–G20 lines the ATP pocket.

It belongs to the guanylate kinase family.

It localises to the cytoplasm. The catalysed reaction is GMP + ATP = GDP + ADP. Functionally, essential for recycling GMP and indirectly, cGMP. The chain is Guanylate kinase from Mycoplasmopsis synoviae (strain 53) (Mycoplasma synoviae).